The following is a 95-amino-acid chain: Co-chaperonin GroES (95 aa).

It belongs to the GroES chaperonin family. Heptamer of 7 subunits arranged in a ring. Interacts with the chaperonin GroEL.

It localises to the cytoplasm. Together with the chaperonin GroEL, plays an essential role in assisting protein folding. The GroEL-GroES system forms a nano-cage that allows encapsulation of the non-native substrate proteins and provides a physical environment optimized to promote and accelerate protein folding. GroES binds to the apical surface of the GroEL ring, thereby capping the opening of the GroEL channel. The polypeptide is Co-chaperonin GroES (Dichelobacter nodosus (strain VCS1703A)).